The following is a 605-amino-acid chain: Isocitrate dehydrogenase kinase/phosphatase (605 aa).

Residues 327–333 (APGIKGL) and Lys348 contribute to the ATP site. The active site involves Asp383.

This sequence belongs to the AceK family.

It is found in the cytoplasm. It carries out the reaction L-seryl-[isocitrate dehydrogenase] + ATP = O-phospho-L-seryl-[isocitrate dehydrogenase] + ADP + H(+). Bifunctional enzyme which can phosphorylate or dephosphorylate isocitrate dehydrogenase (IDH) on a specific serine residue. This is a regulatory mechanism which enables bacteria to bypass the Krebs cycle via the glyoxylate shunt in response to the source of carbon. When bacteria are grown on glucose, IDH is fully active and unphosphorylated, but when grown on acetate or ethanol, the activity of IDH declines drastically concomitant with its phosphorylation. The sequence is that of Isocitrate dehydrogenase kinase/phosphatase from Burkholderia orbicola (strain MC0-3).